The chain runs to 204 residues: Leucyl/phenylalanyl-tRNA--protein transferase (204 aa).

This sequence belongs to the L/F-transferase family.

The protein resides in the cytoplasm. The catalysed reaction is N-terminal L-lysyl-[protein] + L-leucyl-tRNA(Leu) = N-terminal L-leucyl-L-lysyl-[protein] + tRNA(Leu) + H(+). It carries out the reaction N-terminal L-arginyl-[protein] + L-leucyl-tRNA(Leu) = N-terminal L-leucyl-L-arginyl-[protein] + tRNA(Leu) + H(+). It catalyses the reaction L-phenylalanyl-tRNA(Phe) + an N-terminal L-alpha-aminoacyl-[protein] = an N-terminal L-phenylalanyl-L-alpha-aminoacyl-[protein] + tRNA(Phe). Its function is as follows. Functions in the N-end rule pathway of protein degradation where it conjugates Leu, Phe and, less efficiently, Met from aminoacyl-tRNAs to the N-termini of proteins containing an N-terminal arginine or lysine. In Sinorhizobium fredii (strain NBRC 101917 / NGR234), this protein is Leucyl/phenylalanyl-tRNA--protein transferase.